We begin with the raw amino-acid sequence, 69 residues long: MKTISIRDDVYRKLLEMKDEEDSFSDVIEKLLKRKKTDIRRYFGVLKDSEVLDEIEKSLNARKSARFRV.

The protein belongs to the UPF0330 family.

In terms of biological role, possibly the antitoxin component of a type II toxin-antitoxin (TA) system. This chain is Putative antitoxin AF_1481, found in Archaeoglobus fulgidus (strain ATCC 49558 / DSM 4304 / JCM 9628 / NBRC 100126 / VC-16).